Reading from the N-terminus, the 66-residue chain is UPF0337 protein RPA4217 (66 aa).

It belongs to the UPF0337 (CsbD) family.

This chain is UPF0337 protein RPA4217, found in Rhodopseudomonas palustris (strain ATCC BAA-98 / CGA009).